The chain runs to 356 residues: Tyrosine recombinase XerS (356 aa).

In terms of domain architecture, Core-binding (CB) spans Ile16–Thr121. One can recognise a Tyr recombinase domain in the interval Ala169–Asp354. Catalysis depends on residues Arg210, Lys234, His306, Arg309, and His332. The active-site O-(3'-phospho-DNA)-tyrosine intermediate is Tyr341.

Belongs to the 'phage' integrase family. XerS subfamily.

It is found in the cytoplasm. With respect to regulation, ftsK is required for recombination. In terms of biological role, site-specific tyrosine recombinase, which acts by catalyzing the cutting and rejoining of the recombining DNA molecules. Essential to convert dimers of the bacterial chromosome into monomers to permit their segregation at cell division. The protein is Tyrosine recombinase XerS of Streptococcus pyogenes serotype M2 (strain MGAS10270).